A 670-amino-acid polypeptide reads, in one-letter code: Solute carrier organic anion transporter family member 1A3 (670 aa).

At 1–20 the chain is on the cytoplasmic side; the sequence is MGDLEKGAATHGAGCFAKIK. A helical membrane pass occupies residues 21-40; that stretch reads VFLMALTCAYVSKSLSGTFM. At 41–59 the chain is on the extracellular side; it reads SSMLTQIERQFGIPTAIVG. Residues 60-80 traverse the membrane as a helical segment; the sequence is FINGSFEIGNLLLIIFVSYFG. Topologically, residues 81 to 86 are cytoplasmic; sequence MKLHRP. The chain crosses the membrane as a helical span at residues 87–111; that stretch reads IVIGVGCAVMGLGCFIISLPHFLMG. Over 112 to 155 the chain is Extracellular; the sequence is RYEYETTILPTSNLSSNSFLCMENQTQTLNPAQDPAECVKEVKS. N-linked (GlcNAc...) asparagine glycans are attached at residues asparagine 124 and asparagine 135. The helical transmembrane segment at 156 to 184 threads the bilayer; that stretch reads LMWIYVLVGNIIRGIGETPIMPLGVSYIE. Residues 185 to 203 are Cytoplasmic-facing; the sequence is NFAKSENSPLYIGILETGK. The chain crosses the membrane as a helical span at residues 204-224; it reads MIGPIFGLLLGSFCASIYVDT. Over 225 to 242 the chain is Extracellular; sequence GSVNTDDLTITPTDIRWV. Residues 243–267 traverse the membrane as a helical segment; that stretch reads GAWWIGFLVCAGVNILISIPFFFFP. Residues 268–311 lie on the Cytoplasmic side of the membrane; the sequence is KTLPKEGLQENVDGTENAKEESTEKRPRKKNRGITKDFFPFLKS. The disordered stretch occupies residues 277-296; the sequence is ENVDGTENAKEESTEKRPRK. Over residues 283–292 the composition is skewed to basic and acidic residues; it reads ENAKEESTEK. A helical transmembrane segment spans residues 312–333; the sequence is PVLQPDLHAVHPYKVLQVNAFN. Residues 334–353 are Extracellular-facing; the sequence is IYFSFLPKYLENQYGKSTAE. Residues 354–377 form a helical membrane-spanning segment; sequence VIFLMGVYNLPAICIGYLIAGFMM. Topologically, residues 378-381 are cytoplasmic; it reads KKFK. A helical transmembrane segment spans residues 382–405; it reads ITVKTAAFLAFCLSLSEYSFGFCN. The Extracellular segment spans residues 406–513; sequence FLITCDNVPV…PECTNKLQYL (108 aa). Residues 433–488 enclose the Kazal-like domain; sequence NNVLADCNTRCSCLTKTWDPVCGDNGLAYMSACLAGCEKSVGTGTNMVFHNCSCIQ. 3 disulfides stabilise this stretch: cysteine 439–cysteine 469, cysteine 445–cysteine 465, and cysteine 454–cysteine 486. Asparagine 483 and asparagine 492 each carry an N-linked (GlcNAc...) asparagine glycan. A helical membrane pass occupies residues 514-536; it reads LILSGFLSILYSFAAIPGYMVFL. The Cytoplasmic portion of the chain corresponds to 537–545; that stretch reads RCIKSEEKS. Residues 546–571 form a helical membrane-spanning segment; sequence LGIGIHAFCIRVFAGIPAPIYFGALI. At 572–605 the chain is on the extracellular side; the sequence is DRTCLHWGTQKCGAPGACRMYDINSFRRIYLGMS. The helical transmembrane segment at 606-623 threads the bilayer; sequence AALRGSSYLPAFVIVILT. Residues 624–670 are Cytoplasmic-facing; the sequence is RKFSLPGKINSSEMEIAEMKLTEKESQCTDVHRNPKFKNDGELKTKL.

The protein belongs to the organo anion transporter (TC 2.A.60) family. In terms of tissue distribution, all isoforms are detected in kidney, and many are kidney specific. Isoforms 2 and 13 are also detected in liver. Isoforms 4 and 9/K4 are ubiquitous, but isoform 9/K13 is kidney specific. Isoforms 5 and 14 are detected in all tissues tested, with the exception of pancreas and spleen. Isoforms 11 and 15 are detected in kidney, pancreas and testis. Isoform 7 is detected in kidney, liver, testis and spleen.

Its subcellular location is the cell membrane. In terms of biological role, mediates the Na(+)-independent transport of organic anions such as methotrexate, taurocholate, folate and prostaglandin E2. May contribute to renal secretion and/or reabsorption of hydrophobic anionic compounds. Mediates renal clearance of methotrexate from the blood. This is Solute carrier organic anion transporter family member 1A3 (Slco1a3) from Rattus norvegicus (Rat).